Consider the following 606-residue polypeptide: Vitamin B12 transporter BtuB (606 aa).

Positions 1–22 are cleaved as a signal peptide; sequence MQKSLLAIAMASLLTPVSYLHA. A TonB box motif is present at residues 29–36; it reads DTVVVTAN. The region spanning 41-153 is the TBDR plug domain; the sequence is PLAEVIASTT…IAGVINVITT (113 aa). One can recognise a TBDR beta-barrel domain in the interval 158 to 606; the sequence is SEGSVVSLGA…RYFANLTYQF (449 aa). The TonB C-terminal box motif lies at 589–606; that stretch reads LSYNAPERRYFANLTYQF.

Belongs to the TonB-dependent receptor family. BtuB (TC 1.B.14.3.1) subfamily.

The protein localises to the cell outer membrane. Its function is as follows. Involved in the active translocation of vitamin B12 (cyanocobalamin) across the outer membrane to the periplasmic space. It derives its energy for transport by interacting with the trans-periplasmic membrane protein TonB. The protein is Vitamin B12 transporter BtuB of Vibrio vulnificus (strain CMCP6).